The following is a 424-amino-acid chain: Phosphoribosylamine--glycine ligase (424 aa).

Residues 111–312 (KAFVKECGIK…LLDLFLATAK (202 aa)) enclose the ATP-grasp domain. Residue 137-189 (IQNASFPLVIKALNKNTSIVHHQEEALKILEDALKQSNEPVIIEPFLEGFELS) coordinates ATP.

The protein belongs to the GARS family.

It carries out the reaction 5-phospho-beta-D-ribosylamine + glycine + ATP = N(1)-(5-phospho-beta-D-ribosyl)glycinamide + ADP + phosphate + H(+). It functions in the pathway purine metabolism; IMP biosynthesis via de novo pathway; N(1)-(5-phospho-D-ribosyl)glycinamide from 5-phospho-alpha-D-ribose 1-diphosphate: step 2/2. The protein is Phosphoribosylamine--glycine ligase (purD) of Helicobacter pylori (strain J99 / ATCC 700824) (Campylobacter pylori J99).